A 291-amino-acid chain; its full sequence is Prepilin leader peptidase/N-methyltransferase (291 aa).

A helical transmembrane segment spans residues 14 to 34 (LYFSLVFLFSLMIGSFLNVVI). 4 residues coordinate Zn(2+): Cys75, Cys78, Cys100, and Cys103. Helical transmembrane passes span 107 to 127 (ISARYPLVELLTALLSVVVAM), 131 to 151 (PGWGTLAALLLTWVLVALTFI), 162 to 182 (LTLPLLWGGLLFNLLGGYVPL), 186 to 206 (VIGAMAGYLVLWSLYWAFKLL), 232 to 252 (LPIVLLLSSLVGAIFGIGLIL), and 262 to 282 (IPFGPYLAIAGWIALLWGDSI).

The protein belongs to the peptidase A24 family. The cofactor is Zn(2+).

The protein localises to the cell inner membrane. The enzyme catalyses Typically cleaves a -Gly-|-Phe- bond to release an N-terminal, basic peptide of 5-8 residues from type IV prepilin, and then N-methylates the new N-terminal amino group, the methyl donor being S-adenosyl-L-methionine.. Its function is as follows. Plays an essential role in type IV pili and type II pseudopili formation by proteolytically removing the leader sequence from substrate proteins and subsequently monomethylating the alpha-amino group of the newly exposed N-terminal phenylalanine. The protein is Prepilin leader peptidase/N-methyltransferase (tapD) of Aeromonas salmonicida (strain A449).